The following is a 278-amino-acid chain: Biotin synthase (278 aa).

The Radical SAM core domain occupies 1–227; sequence MQIMLCAISN…QSVVMVAGGR (227 aa). [4Fe-4S] cluster contacts are provided by C16, C20, and C23. Residues C60, C95, and C153 each coordinate [2Fe-2S] cluster.

This sequence belongs to the radical SAM superfamily. Biotin synthase family. Homodimer. [4Fe-4S] cluster is required as a cofactor. Requires [2Fe-2S] cluster as cofactor.

It catalyses the reaction (4R,5S)-dethiobiotin + (sulfur carrier)-SH + 2 reduced [2Fe-2S]-[ferredoxin] + 2 S-adenosyl-L-methionine = (sulfur carrier)-H + biotin + 2 5'-deoxyadenosine + 2 L-methionine + 2 oxidized [2Fe-2S]-[ferredoxin]. Its pathway is cofactor biosynthesis; biotin biosynthesis; biotin from 7,8-diaminononanoate: step 2/2. Its function is as follows. Catalyzes the conversion of dethiobiotin (DTB) to biotin by the insertion of a sulfur atom into dethiobiotin via a radical-based mechanism. The sequence is that of Biotin synthase from Campylobacter jejuni subsp. doylei (strain ATCC BAA-1458 / RM4099 / 269.97).